Here is a 324-residue protein sequence, read N- to C-terminus: Viral cathepsin (324 aa).

An N-terminal signal peptide occupies residues 1 to 16 (MNKIVLYLLVYGAVQC). Residues 17–113 (AAYDVLKAPN…VVLDRPPDKG (97 aa)) constitute a propeptide, activation peptide. 3 cysteine pairs are disulfide-bonded: C134–C175, C168–C208, and C263–C311. The active site involves C137. N-linked (GlcNAc...) asparagine; by host glycosylation occurs at N159. Residues H270 and N290 contribute to the active site.

The protein belongs to the peptidase C1 family. Synthesized as an inactive proenzyme and activated by proteolytic removal of the inhibitory propeptide.

It carries out the reaction Endopeptidase of broad specificity, hydrolyzing substrates of both cathepsin L and cathepsin B.. In terms of biological role, cysteine protease that plays an essential role in host liquefaction to facilitate horizontal transmission of the virus. May participate in the degradation of foreign protein expressed by the baculovirus system. The polypeptide is Viral cathepsin (Vcath) (Choristoneura fumiferana nuclear polyhedrosis virus (CfMNPV)).